Here is a 151-residue protein sequence, read N- to C-terminus: Endoribonuclease YbeY (151 aa).

The Zn(2+) site is built by His-113, His-117, and His-123.

This sequence belongs to the endoribonuclease YbeY family. The cofactor is Zn(2+).

It localises to the cytoplasm. In terms of biological role, single strand-specific metallo-endoribonuclease involved in late-stage 70S ribosome quality control and in maturation of the 3' terminus of the 16S rRNA. In Polaromonas naphthalenivorans (strain CJ2), this protein is Endoribonuclease YbeY.